A 190-amino-acid chain; its full sequence is Large ribosomal subunit protein uL6A (190 aa).

It belongs to the universal ribosomal protein uL6 family. Component of the large ribosomal subunit (LSU). Mature yeast ribosomes consist of a small (40S) and a large (60S) subunit. The 40S small subunit contains 1 molecule of ribosomal RNA (18S rRNA) and at least 33 different proteins. The large 60S subunit contains 3 rRNA molecules (25S, 5.8S and 5S rRNA) and at least 46 different proteins. uL6 lines the binding pocket for eukaryotic elongation factor 2 (eEF2).

Its subcellular location is the cytoplasm. The protein resides in the nucleus. Its function is as follows. Component of the ribosome, a large ribonucleoprotein complex responsible for the synthesis of proteins in the cell. The small ribosomal subunit (SSU) binds messenger RNAs (mRNAs) and translates the encoded message by selecting cognate aminoacyl-transfer RNA (tRNA) molecules. The large subunit (LSU) contains the ribosomal catalytic site termed the peptidyl transferase center (PTC), which catalyzes the formation of peptide bonds, thereby polymerizing the amino acids delivered by tRNAs into a polypeptide chain. The nascent polypeptides leave the ribosome through a tunnel in the LSU and interact with protein factors that function in enzymatic processing, targeting, and the membrane insertion of nascent chains at the exit of the ribosomal tunnel. This is Large ribosomal subunit protein uL6A (rpl901) from Schizosaccharomyces pombe (strain 972 / ATCC 24843) (Fission yeast).